The following is a 66-amino-acid chain: Transmembrane protein B66L (66 aa).

A signal peptide spans 1–20 (MDIKRALILFLLFLVVLSNA). The Extracellular segment spans residues 21–40 (FVDYIISNFNHAVTCRKPTY). A helical transmembrane segment spans residues 41 to 61 (FGIVLQGIFLVILFSIVDYLI). The Cytoplasmic portion of the chain corresponds to 62-66 (NENIL).

The protein belongs to the asfivirus B66L family.

It is found in the host membrane. This chain is Transmembrane protein B66L, found in Ornithodoros (relapsing fever ticks).